The following is a 156-amino-acid chain: ATP synthase subunit b (156 aa).

The helical transmembrane segment at 11–31 threads the bilayer; sequence LIAFALFVWFCMKFVWPPIIN.

The protein belongs to the ATPase B chain family. In terms of assembly, F-type ATPases have 2 components, F(1) - the catalytic core - and F(0) - the membrane proton channel. F(1) has five subunits: alpha(3), beta(3), gamma(1), delta(1), epsilon(1). F(0) has three main subunits: a(1), b(2) and c(10-14). The alpha and beta chains form an alternating ring which encloses part of the gamma chain. F(1) is attached to F(0) by a central stalk formed by the gamma and epsilon chains, while a peripheral stalk is formed by the delta and b chains.

It is found in the cell inner membrane. Functionally, f(1)F(0) ATP synthase produces ATP from ADP in the presence of a proton or sodium gradient. F-type ATPases consist of two structural domains, F(1) containing the extramembraneous catalytic core and F(0) containing the membrane proton channel, linked together by a central stalk and a peripheral stalk. During catalysis, ATP synthesis in the catalytic domain of F(1) is coupled via a rotary mechanism of the central stalk subunits to proton translocation. In terms of biological role, component of the F(0) channel, it forms part of the peripheral stalk, linking F(1) to F(0). This Haemophilus influenzae (strain PittGG) protein is ATP synthase subunit b.